A 327-amino-acid polypeptide reads, in one-letter code: MAMTAEVKDELSRLVVNSVSARRAEVASLLRFAGGLHIVSGRVVVEAEVDLGIIARRLRKDIYDLYGYSAVVHVLSASGIRKSTRYVVRVAKDGEALARQTGLLDLRGRPVRGLPAQVVGGSVADAEAAWRGAFLAHGSLTEPGRSSALEVSCPGPEAALALVGAARRLGVSAKAREVRGSDRVVVRDGEAIGALLTRMGAQDTRLTWEERRMRREVRATANRLANFDDANLRRSARAAVAAAARVERALEILGDTVPDHLAAAGTLRVAHRQASLEELGRLADPPMTKDAVAGRIRRLLSMADRKAKQDGIPDTESAVTPDLLEDA.

A DNA-binding region (H-T-H motif) is located at residues 275–308; sequence SLEELGRLADPPMTKDAVAGRIRRLLSMADRKAK. A disordered region spans residues 304–327; that stretch reads DRKAKQDGIPDTESAVTPDLLEDA.

Belongs to the WhiA family.

Its function is as follows. Involved in cell division and chromosome segregation. This is Probable cell division protein WhiA from Mycolicibacterium gilvum (strain PYR-GCK) (Mycobacterium gilvum (strain PYR-GCK)).